The sequence spans 415 residues: MKLKSFLLRYYPPGIMLEYEKHGELKTKSIDLLDLGPSTDVSALVEEIQKAEPLITASRTEQVKLLIQRLQEKLGQHSNHTFYLFKVLKAHILPLTNVALNKSGSCFITGSYDRTCKLWDTASGEELNTLEGHRNVVYAIAFNNPYGDKTATGSFDKTCKLWSVETGKCYHTFRGHTAEIVCLSFNPQSTLVATGSMDTTAKLWNIQNGEEVCTLRGHSAEIISLSFNTSGDRIITGSFDHTVVVWDADTGGKVNILIGHCAEISSALFNWDCSLILTGSMDKTCMLWDATNGKCVATLTGHDDEILDSCFDYTGKLIATASADGTARIFSAATRKCIAKLEGHEGEISKISFNPQGNRLLTGSSDKTARIWDAQTGQCLQVLEGHTDEIFSCTFNYKGNIVITGSKDNTCRIWR.

WD repeat units follow at residues 90–129 (AHILPLTNVALNKSGSCFITGSYDRTCKLWDTASGEELNT), 132–174 (GHRN…HTFR), 175–214 (GHTAEIVCLSFNPQSTLVATGSMDTTAKLWNIQNGEEVCT), 217–256 (GHSAEIISLSFNTSGDRIITGSFDHTVVVWDADTGGKVNI), 259–298 (GHCAEISSALFNWDCSLILTGSMDKTCMLWDATNGKCVAT), 301–340 (GHDDEILDSCFDYTGKLIATASADGTARIFSAATRKCIAK), 343–384 (GHEG…QVLE), and 386–415 (HTDEIFSCTFNYKGNIVITGSKDNTCRIWR).

Belongs to the WD repeat WDR69 family. In terms of assembly, interacts with IFT46.

It is found in the cytoplasm. The protein localises to the cytoskeleton. The protein resides in the flagellum basal body. Its subcellular location is the flagellum axoneme. Its function is as follows. Required for axonemal dynein assembly and ciliary motility in ciliated organs, including Kupffer's vesicle, during embryogenesis. Facilitates the onset of robust cilia motility during development. This Macaca fascicularis (Crab-eating macaque) protein is Dynein assembly factor with WD repeat domains 1 (DAW1).